The primary structure comprises 444 residues: Glutamyl-tRNA reductase (444 aa).

Substrate contacts are provided by residues 49-52 (TCNR), serine 109, 114-116 (ETQ), and glutamine 120. Cysteine 50 serves as the catalytic Nucleophile. 189 to 194 (GAGKMG) provides a ligand contact to NADP(+).

It belongs to the glutamyl-tRNA reductase family. Homodimer.

It carries out the reaction (S)-4-amino-5-oxopentanoate + tRNA(Glu) + NADP(+) = L-glutamyl-tRNA(Glu) + NADPH + H(+). It participates in porphyrin-containing compound metabolism; protoporphyrin-IX biosynthesis; 5-aminolevulinate from L-glutamyl-tRNA(Glu): step 1/2. Catalyzes the NADPH-dependent reduction of glutamyl-tRNA(Glu) to glutamate 1-semialdehyde (GSA). The protein is Glutamyl-tRNA reductase of Bacillus cereus (strain ZK / E33L).